A 1167-amino-acid chain; its full sequence is Rhoptry neck protein 2-like protein 2 (1167 aa).

A signal peptide spans Met1–Gly20. At Lys21–Lys977 the chain is on the cytoplasmic side. Residues Gly55–Ala94 form a disordered region. Basic and acidic residues predominate over residues Met68–Arg77. A helical membrane pass occupies residues Leu978–Leu998. The Extracellular segment spans residues Asp999 to Arg1167. Cysteines 1015 and 1026 form a disulfide.

Belongs to the apicomplexan parasites RON2 family.

The protein localises to the secreted. The protein resides in the host cell membrane. In terms of biological role, may play a role in host cell invasion. The polypeptide is Rhoptry neck protein 2-like protein 2 (RON2L2) (Toxoplasma gondii (strain ATCC 50611 / Me49)).